Consider the following 423-residue polypeptide: Glucose-1-phosphate adenylyltransferase (423 aa).

Alpha-D-glucose 1-phosphate-binding positions include Tyr-107, Gly-172, 187-188 (EK), and Ser-205.

This sequence belongs to the bacterial/plant glucose-1-phosphate adenylyltransferase family. Homotetramer.

It catalyses the reaction alpha-D-glucose 1-phosphate + ATP + H(+) = ADP-alpha-D-glucose + diphosphate. Its pathway is glycan biosynthesis; glycogen biosynthesis. Involved in the biosynthesis of ADP-glucose, a building block required for the elongation reactions to produce glycogen. Catalyzes the reaction between ATP and alpha-D-glucose 1-phosphate (G1P) to produce pyrophosphate and ADP-Glc. This Cereibacter sphaeroides (strain ATCC 17029 / ATH 2.4.9) (Rhodobacter sphaeroides) protein is Glucose-1-phosphate adenylyltransferase.